The sequence spans 183 residues: Ly6/PLAUR domain-containing protein 6B (183 aa).

The first 39 residues, 1–39 (MLYKSSDRPAHKVSMLLLCHALAIAVVQIVIFSESWAFA), serve as a signal peptide directing secretion. One can recognise a UPAR/Ly6 domain in the interval 60 to 151 (FKCFTCENAG…VELPTNHTNA (92 aa)). The segment at 60 to 154 (FKCFTCENAG…PTNHTNAVFA (95 aa)) is sufficient for inhibiting alpha-7 nAChR currents. 6 disulfide bridges follow: Cys-62/Cys-90, Cys-65/Cys-74, Cys-83/Cys-109, Cys-115/Cys-134, Cys-120/Cys-131, and Cys-135/Cys-140. Ser-164 carries the GPI-anchor amidated serine lipid modification. Residues 165–183 (SAPTLYLPVLAWVFVLPLL) constitute a propeptide, removed in mature form.

Its subcellular location is the cell membrane. Its function is as follows. Likely acts as a modulator of nicotinic acetylcholine receptors (nAChRs) activity. In vitro acts on nAChRs in a subtype- and stoichiometry-dependent manner. Modulates specifically alpha-3(3):beta-4(2) nAChRs by enhancing the sensitivity to ACh, decreasing ACh-induced maximal current response and increasing the rate of desensitization to ACh; has no effect on alpha-7 homomeric nAChRs; modulates alpha-3(2):alpha-5:beta-4(2) nAChRs in the context of CHRNA5/alpha-5 variant Asn-398 but not its wild-type sequence. However, according to another report in vitro it can weakly inhibits alpha-7 nAChRs. This is Ly6/PLAUR domain-containing protein 6B (LYPD6B) from Homo sapiens (Human).